The following is a 546-amino-acid chain: Chaperonin GroEL (546 aa).

Residues 29–32, Lys-50, 86–90, Gly-414, and Asp-492 each bind ATP; these read TMGP and DGTTT.

It belongs to the chaperonin (HSP60) family. In terms of assembly, forms a cylinder of 14 subunits composed of two heptameric rings stacked back-to-back. Interacts with the co-chaperonin GroES.

The protein localises to the cytoplasm. It catalyses the reaction ATP + H2O + a folded polypeptide = ADP + phosphate + an unfolded polypeptide.. Functionally, together with its co-chaperonin GroES, plays an essential role in assisting protein folding. The GroEL-GroES system forms a nano-cage that allows encapsulation of the non-native substrate proteins and provides a physical environment optimized to promote and accelerate protein folding. This Helicobacter pylori (strain J99 / ATCC 700824) (Campylobacter pylori J99) protein is Chaperonin GroEL.